A 369-amino-acid chain; its full sequence is MSGYQPPVVIDNGSGMIKAGLAGTREPQFVYPNILGRSKGHTADSRQELCVGDQAQERRSFLSISYPVERGLISSWGDMEIMWKHIYDYNLNLNASDGPVLVTEPALNPLADRQHISEVFFENLGVPAFYMSAQAVLALFAAGFTTGLVLNSGAGITQCVPIFEGYCLSHGVKQLNVAGSDLTSYLMMLLKGDGIMLLRTGDRKVVTDIKENACYVAMNYEDEMTKDSNLEKIYTLPDGKTVKLHKQLFHCPEALFSPYLVNVDAPGIDKMCFGSIMKCDTDLRNSFFSNIILSGGSTSFPGLDKRLIKDVAKLAPANTAVQVIAPPERKISVWMGGSILASLSAFQDMWITAAEFEEVGPNIVHQRCF.

Belongs to the actin family. In terms of assembly, interacts with PFN3. In terms of tissue distribution, testis specific (at protein level). Expressed specifically in haploid germ cells.

The protein localises to the cytoplasm. It is found in the cytoskeleton. The protein resides in the nucleus. This is Actin-related protein T3 (Actrt3) from Mus musculus (Mouse).